A 364-amino-acid chain; its full sequence is Formate dehydrogenase (364 aa).

Valine 93 and asparagine 119 together coordinate substrate. Residues 174–175, aspartate 195, 230–234, threonine 256, aspartate 282, and 311–314 each bind NAD(+); these read RI, PLHAG, and HYSG.

It belongs to the D-isomer specific 2-hydroxyacid dehydrogenase family. FDH subfamily. Homodimer.

Its subcellular location is the cytoplasm. It catalyses the reaction formate + NAD(+) = CO2 + NADH. With respect to regulation, cu(2+), Hg and p-chloromercuribenzoate are strong inhibitors of enzyme activity and Ca(2+), Mg(2+), Zn(2+), Mn(2+), Cd(2+) and Sn(2+) have no effect on activity indicating a cysteine residue in the protein is essential for enzyme activity or to maintain the proper structure of the enzyme. Nitrite and nitrate inhibit some enzyme activity, however cyanide, azide, thiocyanate and cyanate are strong inhibitors of the enzymatic reaction. The inhibition of cyanide is competitive with formate and reversible. Catalyzes the NAD(+)-dependent oxidation of formate to carbon dioxide. Formate oxidation is the final step in the methanol oxidation pathway in methylotrophic microorganisms. Has a role in the detoxification of exogenous formate in non-methylotrophic organisms. This chain is Formate dehydrogenase, found in Candida boidinii (Yeast).